A 33-amino-acid polypeptide reads, in one-letter code: Protamine-1B (33 aa).

The disordered stretch occupies residues 1-33; the sequence is PRRRRRRSSSRPIRRRRPRRVSRRRRRGGRRRR.

In terms of tissue distribution, testis.

It localises to the nucleus. The protein resides in the chromosome. In terms of biological role, protamines substitute for histones in the chromatin of sperm during the haploid phase of spermatogenesis. They compact sperm DNA into a highly condensed, stable and inactive complex. The sequence is that of Protamine-1B from Oncorhynchus mykiss (Rainbow trout).